The primary structure comprises 505 residues: Lysine--tRNA ligase (505 aa).

Glu-415 and Glu-422 together coordinate Mg(2+).

The protein belongs to the class-II aminoacyl-tRNA synthetase family. As to quaternary structure, homodimer. It depends on Mg(2+) as a cofactor.

It is found in the cytoplasm. It carries out the reaction tRNA(Lys) + L-lysine + ATP = L-lysyl-tRNA(Lys) + AMP + diphosphate. The polypeptide is Lysine--tRNA ligase (Cronobacter sakazakii (strain ATCC BAA-894) (Enterobacter sakazakii)).